The chain runs to 175 residues: Adenine phosphoribosyltransferase (175 aa).

The protein belongs to the purine/pyrimidine phosphoribosyltransferase family. In terms of assembly, homodimer.

The protein localises to the cytoplasm. The catalysed reaction is AMP + diphosphate = 5-phospho-alpha-D-ribose 1-diphosphate + adenine. It functions in the pathway purine metabolism; AMP biosynthesis via salvage pathway; AMP from adenine: step 1/1. Catalyzes a salvage reaction resulting in the formation of AMP, that is energically less costly than de novo synthesis. This chain is Adenine phosphoribosyltransferase, found in Francisella tularensis subsp. tularensis (strain WY96-3418).